Reading from the N-terminus, the 262-residue chain is DNA repair protein RecO (262 aa).

This sequence belongs to the RecO family.

Involved in DNA repair and RecF pathway recombination. In Enterococcus faecalis (strain ATCC 700802 / V583), this protein is DNA repair protein RecO.